Reading from the N-terminus, the 525-residue chain is MSLIKNKNCFIPKKIFSEKDDFIFIPCDGVIQEKFEKIALSFESPKLNEINFHKKVKIIYFLDDYQHEIKKEMLPSSIISIIFYNIKNILSSDSIPDTVKFLGFNGYKHQITNEIVKGSVTSLGVGGDMGYPLDKHLLNGSSIKTLCFDGNYSHQITNDSIIDHLDYLCLMKTKFPLNEKSLKNPLNIYPPTIPKNISFYETYKFPIPGTIFPKIESTIITFNINITDIRQPITSKLFQDLPINYNVYIGWGYRHKLDECTIDSKIRFLGIGDVVHPVPETFLGIRVKFYSGYSHQIKPFPNNASLRELALGNVKYPITKDTIPSPWGVGELSIDKGYDFKLTPDLFENVRALKLIDIKSTVFTKHSLPKSNCVLAKVSLISLQIPFDLSFFPTDIINTMLIHNVSQVIGTNQLPKSLTSLSLIKVKLDPKLTIPKSVSHLKIEEIDRPLTKESIPNNLEVFELLNYKFPISKELFPDTVHYIVIGETINPFTIEMIPTSLKHLVSAHDYKFLPFDKPLLKYYYQ.

One copy of the FNIP repeat lies at 65 to 107 (YQHEIKKEMLPSSIISIIFYNIKNILSSDSIPDTVKFLGFNGY).

The protein is FNIP repeat-containing protein DDB_G0274617 of Dictyostelium discoideum (Social amoeba).